The primary structure comprises 159 residues: Protein Smg homolog (159 aa).

The protein belongs to the Smg family.

The sequence is that of Protein Smg homolog from Nitrosococcus oceani (strain ATCC 19707 / BCRC 17464 / JCM 30415 / NCIMB 11848 / C-107).